The following is a 128-amino-acid chain: NADPH-dependent 7-cyano-7-deazaguanine reductase (128 aa).

The Thioimide intermediate role is filled by Cys-34. Asp-41 (proton donor) is an active-site residue. Substrate is bound by residues Val-56–Leu-58 and His-75–Glu-76.

This sequence belongs to the GTP cyclohydrolase I family. QueF type 1 subfamily.

Its subcellular location is the cytoplasm. The enzyme catalyses 7-aminomethyl-7-carbaguanine + 2 NADP(+) = 7-cyano-7-deazaguanine + 2 NADPH + 3 H(+). It functions in the pathway tRNA modification; tRNA-queuosine biosynthesis. In terms of biological role, catalyzes the NADPH-dependent reduction of 7-cyano-7-deazaguanine (preQ0) to 7-aminomethyl-7-deazaguanine (preQ1). The chain is NADPH-dependent 7-cyano-7-deazaguanine reductase from Thermomicrobium roseum (strain ATCC 27502 / DSM 5159 / P-2).